The sequence spans 516 residues: D-alanine--D-alanyl carrier protein ligase (516 aa).

156–157 is a binding site for ATP; the sequence is TS. Residue D203 participates in D-alanine binding. 298–303 is an ATP binding site; it reads NAYGPT. V307 is a D-alanine binding site. Residues D389, 401 to 404, and K503 contribute to the ATP site; that span reads YGGR. K503 is a binding site for D-alanine.

The protein belongs to the ATP-dependent AMP-binding enzyme family. DltA subfamily.

The protein resides in the cytoplasm. It carries out the reaction holo-[D-alanyl-carrier protein] + D-alanine + ATP = D-alanyl-[D-alanyl-carrier protein] + AMP + diphosphate. Its pathway is cell wall biogenesis; lipoteichoic acid biosynthesis. In terms of biological role, catalyzes the first step in the D-alanylation of lipoteichoic acid (LTA), the activation of D-alanine and its transfer onto the D-alanyl carrier protein (Dcp) DltC. In an ATP-dependent two-step reaction, forms a high energy D-alanyl-AMP intermediate, followed by transfer of the D-alanyl residue as a thiol ester to the phosphopantheinyl prosthetic group of the Dcp. D-alanylation of LTA plays an important role in modulating the properties of the cell wall in Gram-positive bacteria, influencing the net charge of the cell wall. The protein is D-alanine--D-alanyl carrier protein ligase of Streptococcus pneumoniae serotype 4 (strain ATCC BAA-334 / TIGR4).